A 141-amino-acid polypeptide reads, in one-letter code: Ribosome maturation factor RimP (141 aa).

Belongs to the RimP family.

The protein resides in the cytoplasm. Functionally, required for maturation of 30S ribosomal subunits. The sequence is that of Ribosome maturation factor RimP from Laribacter hongkongensis (strain HLHK9).